We begin with the raw amino-acid sequence, 335 residues long: Epidermal differentiation-specific protein (335 aa).

4 Beta/gamma crystallin 'Greek key' domains span residues 2–42 (NTIT…KIVG), 43–81 (QPWILHQDINYSGQCLPLEEGEYSGISMNDGASSLRLIT), 87–126 (PQITVYEHVNGGGKALVLTEETNLAFGNMHDNISSHRVQR), and 127–169 (GAWA…YPLR).

The protein belongs to the beta/gamma-crystallin family. Epidermis specific.

The polypeptide is Epidermal differentiation-specific protein (Cynops pyrrhogaster (Japanese fire-bellied newt)).